The following is a 236-amino-acid chain: MADS-box transcription factor 3 (236 aa).

One can recognise an MADS-box domain in the interval 1–61 (MGRGKIEIKR…GRLYEYANNS (61 aa)). Positions 87 to 178 (AQHYQQESSK…RSKVVENERG (92 aa)) constitute a K-box domain.

As to expression, expressed in lemmas, paleas and lodicules.

The protein localises to the nucleus. Functionally, probable transcription factor involved in the development of floral organs. Acts as C-class protein in association with MADS58. Involved in the control of lodicule number (whorl 2), stamen specification (whorl 3) and floral meristem determinacy (whorl 4), but not in the regulation of carpel morphogenesis. Plays a more predominant role in controlling lodicule development and in specifying stamen identity than MADS58. This is MADS-box transcription factor 3 (MADS3) from Oryza sativa subsp. japonica (Rice).